Here is a 406-residue protein sequence, read N- to C-terminus: Putative cfxQ-like protein R730 (406 aa).

Positions 1 to 37 are disordered; it reads MKRSHDSITRSINSDNDSETNMNSDNNNNNKPNQRKK. Positions 13–32 are enriched in low complexity; the sequence is NSDNDSETNMNSDNNNNNKP. 173-180 contacts ATP; the sequence is GPPGVGKS.

The protein belongs to the CbxX/CfxQ family.

The protein is Putative cfxQ-like protein R730 of Acanthamoeba polyphaga mimivirus (APMV).